The following is a 200-amino-acid chain: Holliday junction resolvase RecU (200 aa).

The tract at residues 1 to 25 (MTIRYPNGKRYNQASQPQKTPIKTH) is disordered. Residues 10–25 (RYNQASQPQKTPIKTH) are compositionally biased toward polar residues. Residues threonine 85, aspartate 87, glutamate 100, and glutamine 119 each coordinate Mg(2+).

It belongs to the RecU family. Requires Mg(2+) as cofactor.

It localises to the cytoplasm. It carries out the reaction Endonucleolytic cleavage at a junction such as a reciprocal single-stranded crossover between two homologous DNA duplexes (Holliday junction).. Functionally, endonuclease that resolves Holliday junction intermediates in genetic recombination. Cleaves mobile four-strand junctions by introducing symmetrical nicks in paired strands. Promotes annealing of linear ssDNA with homologous dsDNA. Required for DNA repair, homologous recombination and chromosome segregation. The polypeptide is Holliday junction resolvase RecU (Bacillus cereus (strain B4264)).